A 377-amino-acid chain; its full sequence is MANASEPGGGGGGAEAAALGLRLATLSLLLCVSLAGNVLFALLIVRERSLHRAPYYLLLDLCLADGLRALACLPAVMLAARRAAAAAGTPPGALGCKLLAFLAALFCFHAAFLLLGVGVTRYLAIAHHRFYAERLAGWPCAAMLVCAAWALALAAAFPPVLDGGGADDEDAPCALEQRPDGAPGALGFLLLLAAVVGATHLVYLRLLFFIHDRRKMRPARLVPAVSHDWTFHGPGATGQAAANWTAGFGRGPTPPALVGIRPAGPGRGARRLLVLEEFKTEKRLCKMFYAITLLFLLLWGPYVVASYLRVLVRPGAVPQAYLTASVWLTFAQAGINPVVCFLFNRELRDCFRAQFPCCQSPQATQATLPCDLKGIGL.

At 1 to 24 (MANASEPGGGGGGAEAAALGLRLA) the chain is on the extracellular side. N3 is a glycosylation site (N-linked (GlcNAc...) asparagine). A helical transmembrane segment spans residues 25–45 (TLSLLLCVSLAGNVLFALLIV). The Cytoplasmic portion of the chain corresponds to 46–56 (RERSLHRAPYY). Residues 57–77 (LLLDLCLADGLRALACLPAVM) form a helical membrane-spanning segment. Topologically, residues 78-98 (LAARRAAAAAGTPPGALGCKL) are extracellular. C96 and C173 form a disulfide bridge. A helical transmembrane segment spans residues 99–119 (LAFLAALFCFHAAFLLLGVGV). Over 120–140 (TRYLAIAHHRFYAERLAGWPC) the chain is Cytoplasmic. Residues 141-161 (AAMLVCAAWALALAAAFPPVL) traverse the membrane as a helical segment. At 162–183 (DGGGADDEDAPCALEQRPDGAP) the chain is on the extracellular side. Residues 184-204 (GALGFLLLLAAVVGATHLVYL) form a helical membrane-spanning segment. Topologically, residues 205 to 287 (RLLFFIHDRR…FKTEKRLCKM (83 aa)) are cytoplasmic. The chain crosses the membrane as a helical span at residues 288–308 (FYAITLLFLLLWGPYVVASYL). Over 309-322 (RVLVRPGAVPQAYL) the chain is Extracellular. Residues 323–343 (TASVWLTFAQAGINPVVCFLF) traverse the membrane as a helical segment. At 344-377 (NRELRDCFRAQFPCCQSPQATQATLPCDLKGIGL) the chain is on the cytoplasmic side.

Belongs to the G-protein coupled receptor 1 family. As to expression, expressed as a 3.0 kb transcript, in whole brain, hippocampus, striatum, frontal cortex, thalamus, pons and hypothalamus. A lower molecular weight transcript was detected in all regions examined, except the hypothalamus.

The protein localises to the cell membrane. Functionally, orphan receptor. Possible candidate for amine-like G-protein coupled receptor. This Rattus norvegicus (Rat) protein is Probable G-protein coupled receptor 27 (Gpr27).